A 637-amino-acid polypeptide reads, in one-letter code: Chaperone protein DnaK (637 aa).

Phosphothreonine; by autocatalysis is present on threonine 198. The tract at residues 597–637 is disordered; it reads MYQQAAQESGQTEGAAQDPKGAAQDDDVVDADFEEVKDHKK. Polar residues predominate over residues 600–610; that stretch reads QAAQESGQTEG. Over residues 620-629 the composition is skewed to acidic residues; sequence QDDDVVDADF.

It belongs to the heat shock protein 70 family.

Acts as a chaperone. This Desulforapulum autotrophicum (strain ATCC 43914 / DSM 3382 / VKM B-1955 / HRM2) (Desulfobacterium autotrophicum) protein is Chaperone protein DnaK.